The sequence spans 160 residues: Cytochrome b6-f complex subunit 4 (160 aa).

3 consecutive transmembrane segments (helical) span residues 36–56 (LLYV…ALAV), 95–115 (LLGV…PFIE), and 131–151 (TVFL…ALPL).

It belongs to the cytochrome b family. PetD subfamily. The 4 large subunits of the cytochrome b6-f complex are cytochrome b6, subunit IV (17 kDa polypeptide, PetD), cytochrome f and the Rieske protein, while the 4 small subunits are PetG, PetL, PetM and PetN. The complex functions as a dimer.

It localises to the cellular thylakoid membrane. Its function is as follows. Component of the cytochrome b6-f complex, which mediates electron transfer between photosystem II (PSII) and photosystem I (PSI), cyclic electron flow around PSI, and state transitions. The chain is Cytochrome b6-f complex subunit 4 from Trichormus variabilis (strain ATCC 29413 / PCC 7937) (Anabaena variabilis).